The following is a 344-amino-acid chain: Protein RecA (344 aa).

64–71 (GPESSGKT) serves as a coordination point for ATP.

The protein belongs to the RecA family.

The protein resides in the cytoplasm. In terms of biological role, can catalyze the hydrolysis of ATP in the presence of single-stranded DNA, the ATP-dependent uptake of single-stranded DNA by duplex DNA, and the ATP-dependent hybridization of homologous single-stranded DNAs. It interacts with LexA causing its activation and leading to its autocatalytic cleavage. This chain is Protein RecA, found in Paramagnetospirillum magnetotacticum (Aquaspirillum magnetotacticum).